A 348-amino-acid chain; its full sequence is Haptoglobin-related protein (348 aa).

A signal peptide (not cleaved) is located at residues 1–18; it reads MSDLGAVISLLLWGRQLF. The Sushi domain maps to 34–87; it reads FPKPPEIANGYVEHLFRYQCKNYYRLRTEGDGVYTLNDKKQWINKAVGDKLPEC. The Peptidase S1 domain occupies 104 to 346; that stretch reads ILGGHLDAKG…IQHWVQKTIA (243 aa). Intrachain disulfides connect Cys251–Cys282 and Cys293–Cys323.

It belongs to the peptidase S1 family. In adult liver the amount of HPR mRNA is at the lower limit of detection, therefore the extent of its expression is at most less than 1000-fold that of the HP1F gene. No HPR mRNA can be detected in fetal liver. Expressed in Hep-G2 and leukemia MOLT-4 cell lines.

The protein localises to the secreted. Functionally, primate-specific plasma protein associated with apolipoprotein L-I (apoL-I)-containing high-density lipoprotein (HDL). This HDL particle, termed trypanosome lytic factor-1 (TLF-1), mediates human innate immune protection against many species of African trypanosomes. Binds hemoglobin with high affinity and may contribute to the clearance of cell-free hemoglobin to allow hepatic recycling of heme iron. The chain is Haptoglobin-related protein (HPR) from Homo sapiens (Human).